The sequence spans 190 residues: Dense granule protein 1 (190 aa).

A signal peptide spans 1–24 (MVRVSAIVGAAASVFVCLSAGAYA). Residue Asn30 is glycosylated (N-linked (GlcNAc...) asparagine).

It is found in the secreted. The chain is Dense granule protein 1 (GRA1) from Toxoplasma gondii.